We begin with the raw amino-acid sequence, 289 residues long: ATP synthase subunit a (289 aa).

Transmembrane regions (helical) follow at residues 43–63 (AFHLDTLGWSVALGLIFLLIF), 104–124 (IAPLALTIFVWVFLMNAVDLI), 160–180 (FCVFALIIFYSIKVKGLGGFI), 193–213 (IFVQILLIPVNFLLEFVTLIA), 232–252 (VFILIAVMFGSGLLWLSGLGV), and 259–279 (AVFHILIITLQAFIFMMLTIV).

The protein belongs to the ATPase A chain family. F-type ATPases have 2 components, CF(1) - the catalytic core - and CF(0) - the membrane proton channel. CF(1) has five subunits: alpha(3), beta(3), gamma(1), delta(1), epsilon(1). CF(0) has three main subunits: a(1), b(2) and c(9-12). The alpha and beta chains form an alternating ring which encloses part of the gamma chain. CF(1) is attached to CF(0) by a central stalk formed by the gamma and epsilon chains, while a peripheral stalk is formed by the delta and b chains.

The protein localises to the cell inner membrane. In terms of biological role, key component of the proton channel; it plays a direct role in the translocation of protons across the membrane. This chain is ATP synthase subunit a, found in Pseudomonas putida (strain ATCC 47054 / DSM 6125 / CFBP 8728 / NCIMB 11950 / KT2440).